The following is a 172-amino-acid chain: 2S seed storage-like protein (172 aa).

The first 35 residues, methionine 1–glycine 35, serve as a signal peptide directing secretion. Residues phenylalanine 108–lysine 172 form a disordered region. Over residues glutamate 151 to arginine 160 the composition is skewed to basic and acidic residues.

It belongs to the 2S seed storage albumins family.

The sequence is that of 2S seed storage-like protein from Picea glauca (White spruce).